We begin with the raw amino-acid sequence, 229 residues long: All-trans retinoic acid-induced differentiation factor (229 aa).

Residues 1–30 form the signal peptide; the sequence is MAPHDPGSLTTLVPWAAALLLALGVERALA. The Extracellular portion of the chain corresponds to 31–199; that stretch reads LPEICTQCPG…YKCMRQGSFS (169 aa). 4 N-linked (GlcNAc...) asparagine glycosylation sites follow: N44, N79, N157, and N168. In terms of domain architecture, EGF-like spans 152 to 193; it reads QKNLCNNTGDPEMCPENGSCVPDGPGLLQCVCADGFHGYKCM. Cystine bridges form between C156/C171, C165/C181, and C183/C192. Residues 200–220 form a helical membrane-spanning segment; it reads LLMFFGILGATTLSVSILLWA. Over 221–229 the chain is Cytoplasmic; it reads TQRRKAKTS.

As to quaternary structure, interacts with NELL1; the interaction promotes osteoblastic differentiation and mineralization. Interacts with SLC37A3; the interaction is direct and both proteins are mutually dependent for their stability. In terms of tissue distribution, weakly expressed in hematopoietic cell lines.

Its subcellular location is the nucleus envelope. The protein localises to the cell membrane. The protein resides in the lysosome membrane. Functionally, promotes osteoblast cell differentiation and terminal mineralization. Plays a role in inducing the cell cycle arrest via inhibiting CCND1 expression in all-trans-retinoic acid (ATRA) signal pathway. In osteoclasts, forms a transporter complex with ATRAID for nitrogen-containing-bisphophonates (N-BPs) required for releasing N-BP molecules that have trafficked to lysosomes through fluid-phase endocytosis into the cytosol. This chain is All-trans retinoic acid-induced differentiation factor, found in Homo sapiens (Human).